The sequence spans 723 residues: Pentatricopeptide repeat-containing protein At5g50280, chloroplastic (723 aa).

Residues 1 to 44 (MSMASSSLATQSFFSSFPLSHRLHFPVPYLLLRSSFFRKPLSLS) constitute a chloroplast transit peptide. The disordered stretch occupies residues 70-97 (IQQPENSTINSEESECEEEDDEEGDDFT). Over residues 81 to 97 (EESECEEEDDEEGDDFT) the composition is skewed to acidic residues. PPR repeat units lie at residues 272–306 (DVRLYNAAISGLSASQRYDDAWEVYEAMDKINVYP), 307–342 (DNVTCAILITTLRKAGRSAKEVWEIFEKMSEKGVKW), 343–377 (SQDVFGGLVKSFCDEGLKEEALVIQTEMEKKGIRS), 378–412 (NTIVYNTLMDAYNKSNHIEEVEGLFTEMRDKGLKP), 413–447 (SAATYNILMDAYARRMQPDIVETLLREMEDLGLEP), 448–483 (NVKSYTCLISAYGRTKKMSDMAADAFLRMKKVGLKP), 484–518 (SSHSYTALIHAYSVSGWHEKAYASFEEMCKEGIKP), 519–553 (SVETYTSVLDAFRRSGDTGKLMEIWKLMLREKIKG), 554–588 (TRITYNTLLDGFAKQGLYIEARDVVSEFSKMGLQP), 589–623 (SVMTYNMLMNAYARGGQDAKLPQLLKEMAALNLKP), and 624–658 (DSITYSTMIYAFVRVRDFKRAFFYHKMMVKSGQVP). The interval 700-723 (TKGKKDEFWKYKTNRTTSPGRHRS) is disordered. Residues 713–723 (NRTTSPGRHRS) are compositionally biased toward polar residues.

This sequence belongs to the PPR family. P subfamily.

Its subcellular location is the plastid. It localises to the chloroplast. The polypeptide is Pentatricopeptide repeat-containing protein At5g50280, chloroplastic (EMB1006) (Arabidopsis thaliana (Mouse-ear cress)).